The chain runs to 315 residues: 4-hydroxy-3-methylbut-2-enyl diphosphate reductase (315 aa).

[4Fe-4S] cluster is bound at residue Cys-12. 2 residues coordinate (2E)-4-hydroxy-3-methylbut-2-enyl diphosphate: His-41 and His-74. Residues His-41 and His-74 each coordinate dimethylallyl diphosphate. Positions 41 and 74 each coordinate isopentenyl diphosphate. Position 96 (Cys-96) interacts with [4Fe-4S] cluster. A (2E)-4-hydroxy-3-methylbut-2-enyl diphosphate-binding site is contributed by His-124. Dimethylallyl diphosphate is bound at residue His-124. Residue His-124 coordinates isopentenyl diphosphate. The active-site Proton donor is the Glu-126. Thr-168 contacts (2E)-4-hydroxy-3-methylbut-2-enyl diphosphate. Cys-198 is a binding site for [4Fe-4S] cluster. (2E)-4-hydroxy-3-methylbut-2-enyl diphosphate-binding residues include Ser-226, Ser-227, Asn-228, and Ser-270. Dimethylallyl diphosphate is bound by residues Ser-226, Ser-227, Asn-228, and Ser-270. Residues Ser-226, Ser-227, Asn-228, and Ser-270 each coordinate isopentenyl diphosphate.

It belongs to the IspH family. [4Fe-4S] cluster is required as a cofactor.

It catalyses the reaction isopentenyl diphosphate + 2 oxidized [2Fe-2S]-[ferredoxin] + H2O = (2E)-4-hydroxy-3-methylbut-2-enyl diphosphate + 2 reduced [2Fe-2S]-[ferredoxin] + 2 H(+). It carries out the reaction dimethylallyl diphosphate + 2 oxidized [2Fe-2S]-[ferredoxin] + H2O = (2E)-4-hydroxy-3-methylbut-2-enyl diphosphate + 2 reduced [2Fe-2S]-[ferredoxin] + 2 H(+). It functions in the pathway isoprenoid biosynthesis; dimethylallyl diphosphate biosynthesis; dimethylallyl diphosphate from (2E)-4-hydroxy-3-methylbutenyl diphosphate: step 1/1. The protein operates within isoprenoid biosynthesis; isopentenyl diphosphate biosynthesis via DXP pathway; isopentenyl diphosphate from 1-deoxy-D-xylulose 5-phosphate: step 6/6. Catalyzes the conversion of 1-hydroxy-2-methyl-2-(E)-butenyl 4-diphosphate (HMBPP) into a mixture of isopentenyl diphosphate (IPP) and dimethylallyl diphosphate (DMAPP). Acts in the terminal step of the DOXP/MEP pathway for isoprenoid precursor biosynthesis. In Pseudomonas entomophila (strain L48), this protein is 4-hydroxy-3-methylbut-2-enyl diphosphate reductase.